Here is a 487-residue protein sequence, read N- to C-terminus: Mu-like prophage FluMu tail sheath protein (487 aa).

The protein belongs to the myoviridae tail sheath protein family.

Major component of the tail. The chain is Mu-like prophage FluMu tail sheath protein from Haemophilus influenzae (strain ATCC 51907 / DSM 11121 / KW20 / Rd).